A 539-amino-acid chain; its full sequence is Phosphoenolpyruvate carboxykinase (ATP) (539 aa).

R61, Y195, and K201 together coordinate substrate. ATP is bound by residues K201, H220, and 238-246 (GLSGTGKTT). Residues K201 and H220 each coordinate Mn(2+). D259 is a Mn(2+) binding site. ATP is bound by residues E287, R325, and T450. R325 contributes to the substrate binding site.

Belongs to the phosphoenolpyruvate carboxykinase (ATP) family. It depends on Mn(2+) as a cofactor.

Its subcellular location is the cytoplasm. It carries out the reaction oxaloacetate + ATP = phosphoenolpyruvate + ADP + CO2. Its pathway is carbohydrate biosynthesis; gluconeogenesis. Its function is as follows. Involved in the gluconeogenesis. Catalyzes the conversion of oxaloacetate (OAA) to phosphoenolpyruvate (PEP) through direct phosphoryl transfer between the nucleoside triphosphate and OAA. This chain is Phosphoenolpyruvate carboxykinase (ATP), found in Methylobacterium radiotolerans (strain ATCC 27329 / DSM 1819 / JCM 2831 / NBRC 15690 / NCIMB 10815 / 0-1).